The sequence spans 338 residues: Methionine import ATP-binding protein MetN 1 (338 aa).

Residues 2–241 (IEVRSVTKRF…PHSELGVGLL (240 aa)) enclose the ABC transporter domain. 38 to 45 (GQSGAGKT) lines the ATP pocket.

It belongs to the ABC transporter superfamily. Methionine importer (TC 3.A.1.24) family. In terms of assembly, the complex is composed of two ATP-binding proteins (MetN), two transmembrane proteins (MetI) and a solute-binding protein (MetQ).

Its subcellular location is the cell membrane. The catalysed reaction is L-methionine(out) + ATP + H2O = L-methionine(in) + ADP + phosphate + H(+). It catalyses the reaction D-methionine(out) + ATP + H2O = D-methionine(in) + ADP + phosphate + H(+). Its function is as follows. Part of the ABC transporter complex MetNIQ involved in methionine import. Responsible for energy coupling to the transport system. This chain is Methionine import ATP-binding protein MetN 1, found in Rhodococcus jostii (strain RHA1).